Here is a 332-residue protein sequence, read N- to C-terminus: Succinylglutamate desuccinylase (332 aa).

Zn(2+)-binding residues include His59, Glu62, and His151. The active site involves Glu215.

The protein belongs to the AspA/AstE family. Succinylglutamate desuccinylase subfamily. The cofactor is Zn(2+).

The catalysed reaction is N-succinyl-L-glutamate + H2O = L-glutamate + succinate. It participates in amino-acid degradation; L-arginine degradation via AST pathway; L-glutamate and succinate from L-arginine: step 5/5. Its function is as follows. Transforms N(2)-succinylglutamate into succinate and glutamate. The polypeptide is Succinylglutamate desuccinylase (Pseudomonas paraeruginosa (strain DSM 24068 / PA7) (Pseudomonas aeruginosa (strain PA7))).